The following is a 346-amino-acid chain: Holliday junction branch migration complex subunit RuvB (346 aa).

Residues 1 to 183 form a large ATPase domain (RuvB-L) region; it reads MTEQRIIASS…FGIVQRLEFY (183 aa). ATP-binding positions include Ile-22, Arg-23, Gly-64, Lys-67, Thr-68, Thr-69, 130–132, Arg-173, Tyr-183, and Arg-220; that span reads EDF. Thr-68 is a binding site for Mg(2+). Positions 184-254 are small ATPAse domain (RuvB-S); sequence SPQELTRIVS…VAQAAMQMLK (71 aa). Residues 257-346 form a head domain (RuvB-H) region; it reads PEGFDELDRR…PGIGEPGDLF (90 aa). DNA contacts are provided by Arg-293, Arg-312, and Arg-317.

The protein belongs to the RuvB family. As to quaternary structure, homohexamer. Forms an RuvA(8)-RuvB(12)-Holliday junction (HJ) complex. HJ DNA is sandwiched between 2 RuvA tetramers; dsDNA enters through RuvA and exits via RuvB. An RuvB hexamer assembles on each DNA strand where it exits the tetramer. Each RuvB hexamer is contacted by two RuvA subunits (via domain III) on 2 adjacent RuvB subunits; this complex drives branch migration. In the full resolvosome a probable DNA-RuvA(4)-RuvB(12)-RuvC(2) complex forms which resolves the HJ.

The protein localises to the cytoplasm. It carries out the reaction ATP + H2O = ADP + phosphate + H(+). Functionally, the RuvA-RuvB-RuvC complex processes Holliday junction (HJ) DNA during genetic recombination and DNA repair, while the RuvA-RuvB complex plays an important role in the rescue of blocked DNA replication forks via replication fork reversal (RFR). RuvA specifically binds to HJ cruciform DNA, conferring on it an open structure. The RuvB hexamer acts as an ATP-dependent pump, pulling dsDNA into and through the RuvAB complex. RuvB forms 2 homohexamers on either side of HJ DNA bound by 1 or 2 RuvA tetramers; 4 subunits per hexamer contact DNA at a time. Coordinated motions by a converter formed by DNA-disengaged RuvB subunits stimulates ATP hydrolysis and nucleotide exchange. Immobilization of the converter enables RuvB to convert the ATP-contained energy into a lever motion, pulling 2 nucleotides of DNA out of the RuvA tetramer per ATP hydrolyzed, thus driving DNA branch migration. The RuvB motors rotate together with the DNA substrate, which together with the progressing nucleotide cycle form the mechanistic basis for DNA recombination by continuous HJ branch migration. Branch migration allows RuvC to scan DNA until it finds its consensus sequence, where it cleaves and resolves cruciform DNA. This Xanthomonas euvesicatoria pv. vesicatoria (strain 85-10) (Xanthomonas campestris pv. vesicatoria) protein is Holliday junction branch migration complex subunit RuvB.